A 170-amino-acid chain; its full sequence is Adenine phosphoribosyltransferase (170 aa).

The protein belongs to the purine/pyrimidine phosphoribosyltransferase family. As to quaternary structure, homodimer.

The protein resides in the cytoplasm. It carries out the reaction AMP + diphosphate = 5-phospho-alpha-D-ribose 1-diphosphate + adenine. Its pathway is purine metabolism; AMP biosynthesis via salvage pathway; AMP from adenine: step 1/1. Its function is as follows. Catalyzes a salvage reaction resulting in the formation of AMP, that is energically less costly than de novo synthesis. The protein is Adenine phosphoribosyltransferase of Bacillus mycoides (strain KBAB4) (Bacillus weihenstephanensis).